The primary structure comprises 443 residues: Chromosome partition protein MukF (443 aa).

Residues 209–237 (LDETSGNLRELQDVLNASGDKLQSQLLRI) are leucine-zipper.

This sequence belongs to the MukF family. Interacts, and probably forms a ternary complex, with MukE and MukB via its C-terminal region. The complex formation is stimulated by calcium or magnesium. It is required for an interaction between MukE and MukB.

Its subcellular location is the cytoplasm. The protein resides in the nucleoid. In terms of biological role, involved in chromosome condensation, segregation and cell cycle progression. May participate in facilitating chromosome segregation by condensation DNA from both sides of a centrally located replisome during cell division. Not required for mini-F plasmid partitioning. Probably acts via its interaction with MukB and MukE. Overexpression results in anucleate cells. It has a calcium binding activity. In Glaesserella parasuis serovar 5 (strain SH0165) (Haemophilus parasuis), this protein is Chromosome partition protein MukF.